The primary structure comprises 120 residues: Large ribosomal subunit protein uL18 (120 aa).

Belongs to the universal ribosomal protein uL18 family. In terms of assembly, part of the 50S ribosomal subunit; part of the 5S rRNA/L5/L18/L25 subcomplex. Contacts the 5S and 23S rRNAs.

Its function is as follows. This is one of the proteins that bind and probably mediate the attachment of the 5S RNA into the large ribosomal subunit, where it forms part of the central protuberance. The sequence is that of Large ribosomal subunit protein uL18 from Beijerinckia indica subsp. indica (strain ATCC 9039 / DSM 1715 / NCIMB 8712).